Consider the following 350-residue polypeptide: 5'-tyrosyl-DNA phosphodiesterase (350 aa).

The segment at 113–117 (NIDGL) is interaction with 5' end of substrate DNA. Mg(2+)-binding residues include aspartate 115 and glutamate 145. Residues 219 to 224 (HLESMR) form an interaction with 5' end of substrate DNA region. The Proton donor/acceptor role is filled by aspartate 258. An interaction with 5' end of substrate DNA region spans residues 260–262 (NLR).

The protein belongs to the CCR4/nocturin family. TTRAP/TDP2 subfamily. Mg(2+) serves as cofactor. The cofactor is Mn(2+).

It is found in the nucleus. The protein localises to the PML body. Its function is as follows. DNA repair enzyme that can remove a variety of covalent adducts from DNA through hydrolysis of a 5'-phosphodiester bond, giving rise to DNA with a free 5' phosphate. Catalyzes the hydrolysis of dead-end complexes between DNA and the topoisomerase 2 (top2) active site tyrosine residue. Hydrolyzes 5'-phosphoglycolates on protruding 5' ends on DNA double-strand breaks (DSBs) due to DNA damage by radiation and free radicals. This chain is 5'-tyrosyl-DNA phosphodiesterase, found in Caenorhabditis briggsae.